The primary structure comprises 448 residues: Maintenance of mitochondrial morphology protein 1 (448 aa).

The Lumenal portion of the chain corresponds to 1 to 74; the sequence is MTESVIYSGT…LNHTWSFTQG (74 aa). Residues 75-95 form a helical membrane-spanning segment; it reads LVVGQLSVIVVVAIFIKFFVF. At 96 to 448 the chain is on the cytoplasmic side; it reads ADSSATTTTT…IVDKTEEASI (353 aa). 2 disordered regions span residues 119 to 144 and 303 to 357; these read RNKNVRGTSNEDKDPNNNKEDDLNSP and LQNV…SQED. The span at 127-140 shows a compositional bias: basic and acidic residues; the sequence is SNEDKDPNNNKEDD. Positions 164 to 419 constitute an SMP-LTD domain; that stretch reads SPESLDWFNV…EPRFQVVKVP (256 aa). Over residues 313–332 the composition is skewed to low complexity; sequence PSNEPNSQNQTQQPTPVNNS. The segment covering 345–356 has biased composition (basic and acidic residues); sequence ETKHSKAKRSQE.

It belongs to the MMM1 family. In terms of assembly, homodimer. Component of the ER-mitochondria encounter structure (ERMES) or MDM complex, composed of MMM1, MDM10, MDM12 and MDM34. An MMM1 homodimer associates with one molecule of MDM12 on each side in a pairwise head-to-tail manner, and the SMP-LTD domains of MMM1 and MDM12 generate a continuous hydrophobic tunnel for phospholipid trafficking.

The protein localises to the endoplasmic reticulum membrane. Its function is as follows. Component of the ERMES/MDM complex, which serves as a molecular tether to connect the endoplasmic reticulum (ER) and mitochondria. Components of this complex are involved in the control of mitochondrial shape and protein biogenesis, and function in nonvesicular lipid trafficking between the ER and mitochondria. The MDM12-MMM1 subcomplex functions in the major beta-barrel assembly pathway that is responsible for biogenesis of all outer membrane beta-barrel proteins, and acts in a late step after the SAM complex. The MDM10-MDM12-MMM1 subcomplex further acts in the TOM40-specific pathway after the action of the MDM12-MMM1 complex. Essential for establishing and maintaining the structure of mitochondria and maintenance of mtDNA nucleoids. The polypeptide is Maintenance of mitochondrial morphology protein 1 (Debaryomyces hansenii (strain ATCC 36239 / CBS 767 / BCRC 21394 / JCM 1990 / NBRC 0083 / IGC 2968) (Yeast)).